Consider the following 321-residue polypeptide: Cytochrome c biogenesis protein CcsA (321 aa).

8 consecutive transmembrane segments (helical) span residues 17-37 (VVSI…FVGL), 48-68 (TFFC…HLPI), 71-91 (LYES…VPYF), 98-118 (LSTI…WGLL), 143-163 (MVSG…LLVI), 225-245 (ILSI…VWAN), 259-273 (TWAF…IYFH), and 286-306 (AIVA…VNLL).

This sequence belongs to the CcmF/CycK/Ccl1/NrfE/CcsA family. In terms of assembly, may interact with Ccs1.

It is found in the plastid. The protein localises to the chloroplast thylakoid membrane. Functionally, required during biogenesis of c-type cytochromes (cytochrome c6 and cytochrome f) at the step of heme attachment. The sequence is that of Cytochrome c biogenesis protein CcsA from Populus trichocarpa (Western balsam poplar).